The following is a 301-amino-acid chain: Putative glycosyltransferase MJ1113 (301 aa).

The next 8 helical transmembrane spans lie at 2 to 22 (GHYFINLFTYTIIAFIFSAVL), 62 to 82 (FIPFVNPIFVLPIITAGIIGI), 95 to 115 (LILLFISGLIIGILFYNNSYV), 117 to 137 (LIEILIIALGIMISSNLTNML), 140 to 160 (FNGLEIGMGVIASISLALVLF), 164 to 184 (YTTGFLSALIFSASYLGLLIF), 191 to 211 (VFPGDVGTLPIGAFLAVLAVV), and 280 to 300 (VTVLWIIGIFFGIVGILISLI).

It belongs to the glycosyltransferase 4 family.

It localises to the cell membrane. This is Putative glycosyltransferase MJ1113 from Methanocaldococcus jannaschii (strain ATCC 43067 / DSM 2661 / JAL-1 / JCM 10045 / NBRC 100440) (Methanococcus jannaschii).